Reading from the N-terminus, the 124-residue chain is Fluoride-specific ion channel FluC (124 aa).

The next 4 helical transmembrane spans lie at 5 to 27, 42 to 62, 63 to 83, and 95 to 115; these read LFVALGGSIGAVLRYLISILMLQ, ILGSFLMGVVYALGQVSEVSP, EIKAFIGVGMLGALTTFSTFS, and LVKAILNVVVNVGVCIFVVYL. Gly-74 and Thr-77 together coordinate Na(+).

It belongs to the fluoride channel Fluc/FEX (TC 1.A.43) family.

The protein resides in the cell inner membrane. The catalysed reaction is fluoride(in) = fluoride(out). Na(+) is not transported, but it plays an essential structural role and its presence is essential for fluoride channel function. Functionally, fluoride-specific ion channel. Important for reducing fluoride concentration in the cell, thus reducing its toxicity. This chain is Fluoride-specific ion channel FluC, found in Shewanella piezotolerans (strain WP3 / JCM 13877).